Consider the following 667-residue polypeptide: 1-deoxy-D-xylulose-5-phosphate synthase (667 aa).

Residues H73 and 113–115 contribute to the thiamine diphosphate site; that span reads SHA. D145 is a binding site for Mg(2+). Residues 146 to 147, N175, Y297, and E379 each bind thiamine diphosphate; that span reads GA. Residue N175 coordinates Mg(2+).

Belongs to the transketolase family. DXPS subfamily. In terms of assembly, homodimer. Mg(2+) serves as cofactor. It depends on thiamine diphosphate as a cofactor.

The enzyme catalyses D-glyceraldehyde 3-phosphate + pyruvate + H(+) = 1-deoxy-D-xylulose 5-phosphate + CO2. It functions in the pathway metabolic intermediate biosynthesis; 1-deoxy-D-xylulose 5-phosphate biosynthesis; 1-deoxy-D-xylulose 5-phosphate from D-glyceraldehyde 3-phosphate and pyruvate: step 1/1. Catalyzes the acyloin condensation reaction between C atoms 2 and 3 of pyruvate and glyceraldehyde 3-phosphate to yield 1-deoxy-D-xylulose-5-phosphate (DXP). This is 1-deoxy-D-xylulose-5-phosphate synthase from Kocuria rhizophila (strain ATCC 9341 / DSM 348 / NBRC 103217 / DC2201).